The following is a 91-amino-acid chain: DNA-directed RNA polymerase subunit omega (91 aa).

Belongs to the RNA polymerase subunit omega family. The RNAP catalytic core consists of 2 alpha, 1 beta, 1 beta' and 1 omega subunit. When a sigma factor is associated with the core the holoenzyme is formed, which can initiate transcription.

The catalysed reaction is RNA(n) + a ribonucleoside 5'-triphosphate = RNA(n+1) + diphosphate. Functionally, promotes RNA polymerase assembly. Latches the N- and C-terminal regions of the beta' subunit thereby facilitating its interaction with the beta and alpha subunits. In Sodalis glossinidius (strain morsitans), this protein is DNA-directed RNA polymerase subunit omega.